Consider the following 652-residue polypeptide: uncharacterized protein (652 aa).

Residues 1–13 (MSVTESKAKTERK) show a composition bias toward basic and acidic residues. The segment at 1–21 (MSVTESKAKTERKSSRKPAKT) is disordered.

Belongs to the ParB family.

This is an uncharacterized protein from Escherichia coli (strain K12).